The sequence spans 331 residues: Ketol-acid reductoisomerase (NADP(+)) (331 aa).

The region spanning 2 to 182 (AQLFYDTDAD…GGTRAGILET (181 aa)) is the KARI N-terminal Rossmann domain. NADP(+) contacts are provided by residues 25–28 (YGSQ), Ser-51, Ser-53, and 83–86 (DEFQ). The active site involves His-108. Residue Gly-134 coordinates NADP(+). The KARI C-terminal knotted domain maps to 183–328 (NFKEETETDL…KGLRSMFSWL (146 aa)). The Mg(2+) site is built by Asp-191, Glu-195, Glu-227, and Glu-231. Substrate is bound at residue Ser-252.

It belongs to the ketol-acid reductoisomerase family. The cofactor is Mg(2+).

The catalysed reaction is (2R)-2,3-dihydroxy-3-methylbutanoate + NADP(+) = (2S)-2-acetolactate + NADPH + H(+). It catalyses the reaction (2R,3R)-2,3-dihydroxy-3-methylpentanoate + NADP(+) = (S)-2-ethyl-2-hydroxy-3-oxobutanoate + NADPH + H(+). The protein operates within amino-acid biosynthesis; L-isoleucine biosynthesis; L-isoleucine from 2-oxobutanoate: step 2/4. It functions in the pathway amino-acid biosynthesis; L-valine biosynthesis; L-valine from pyruvate: step 2/4. Functionally, involved in the biosynthesis of branched-chain amino acids (BCAA). Catalyzes an alkyl-migration followed by a ketol-acid reduction of (S)-2-acetolactate (S2AL) to yield (R)-2,3-dihydroxy-isovalerate. In the isomerase reaction, S2AL is rearranged via a Mg-dependent methyl migration to produce 3-hydroxy-3-methyl-2-ketobutyrate (HMKB). In the reductase reaction, this 2-ketoacid undergoes a metal-dependent reduction by NADPH to yield (R)-2,3-dihydroxy-isovalerate. The sequence is that of Ketol-acid reductoisomerase (NADP(+)) from Synechococcus sp. (strain WH7803).